The primary structure comprises 327 residues: Acetyl-coenzyme A carboxylase carboxyl transferase subunit alpha (327 aa).

A CoA carboxyltransferase C-terminal domain is found at 46–299 (LEARAIQLRR…RQVLLRHLKD (254 aa)).

It belongs to the AccA family. As to quaternary structure, acetyl-CoA carboxylase is a heterohexamer composed of biotin carboxyl carrier protein (AccB), biotin carboxylase (AccC) and two subunits each of ACCase subunit alpha (AccA) and ACCase subunit beta (AccD).

The protein localises to the cytoplasm. The catalysed reaction is N(6)-carboxybiotinyl-L-lysyl-[protein] + acetyl-CoA = N(6)-biotinyl-L-lysyl-[protein] + malonyl-CoA. The protein operates within lipid metabolism; malonyl-CoA biosynthesis; malonyl-CoA from acetyl-CoA: step 1/1. In terms of biological role, component of the acetyl coenzyme A carboxylase (ACC) complex. First, biotin carboxylase catalyzes the carboxylation of biotin on its carrier protein (BCCP) and then the CO(2) group is transferred by the carboxyltransferase to acetyl-CoA to form malonyl-CoA. This chain is Acetyl-coenzyme A carboxylase carboxyl transferase subunit alpha, found in Synechococcus elongatus (strain ATCC 33912 / PCC 7942 / FACHB-805) (Anacystis nidulans R2).